Consider the following 361-residue polypeptide: S-adenosylmethionine:tRNA ribosyltransferase-isomerase (361 aa).

It belongs to the QueA family. Monomer.

The protein resides in the cytoplasm. The enzyme catalyses 7-aminomethyl-7-carbaguanosine(34) in tRNA + S-adenosyl-L-methionine = epoxyqueuosine(34) in tRNA + adenine + L-methionine + 2 H(+). Its pathway is tRNA modification; tRNA-queuosine biosynthesis. Functionally, transfers and isomerizes the ribose moiety from AdoMet to the 7-aminomethyl group of 7-deazaguanine (preQ1-tRNA) to give epoxyqueuosine (oQ-tRNA). This is S-adenosylmethionine:tRNA ribosyltransferase-isomerase from Mesorhizobium japonicum (strain LMG 29417 / CECT 9101 / MAFF 303099) (Mesorhizobium loti (strain MAFF 303099)).